Reading from the N-terminus, the 672-residue chain is Putative per-hexamer repeat protein 5 (672 aa).

Gly residues-rich tracts occupy residues 141-161, 171-191, 215-233, 243-263, 273-295, 303-355, and 365-389; these read TGTG…GTGT, TDRG…GTGT, TGTG…GTDT, and TGTG…GSGS. Disordered regions lie at residues 141–193 and 213–672; these read TGTG…GTGT and TGTG…TGTA. Residues 390 to 424 show a composition bias toward low complexity; sequence GTAKVTGTATTTATVTETGTAKVTGTDTGTAKVTG. Residues 425-469 show a composition bias toward gly residues; sequence TGTGTGTGTGTGTGTGTGTGTGTGTGTGTGTGTGTGTGTGTGSGS. The span at 470–486 shows a compositional bias: low complexity; sequence GTAKVTGTDTGTAKVTG. A compositionally biased stretch (gly residues) spans 487 to 537; it reads TGTGTGTGTGTGTGTGTGTGTGTGSGSGSGSGSGSGSGTGTGTGLGSGSGS. A compositionally biased stretch (low complexity) spans 538–552; that stretch reads GTAKVTGTGTAKVTG. Positions 553-617 are enriched in gly residues; that stretch reads TGTGTGTGTG…GTGTGTGTGT (65 aa). Low complexity predominate over residues 618-636; the sequence is GTSTVTVRGTGTGTATATG. Gly residues-rich tracts occupy residues 637-653 and 663-672; these read TGTG…GTGT and RGTGTGTGTA.

This chain is Putative per-hexamer repeat protein 5 (Phxr5), found in Mus musculus (Mouse).